We begin with the raw amino-acid sequence, 301 residues long: Epimerase family protein Mb2239 (301 aa).

It belongs to the NAD(P)-dependent epimerase/dehydratase family. SDR39U1 subfamily.

This Mycobacterium bovis (strain ATCC BAA-935 / AF2122/97) protein is Epimerase family protein Mb2239.